The sequence spans 62 residues: UPF0339 protein Atu0232 (62 aa).

The protein belongs to the UPF0339 family.

The chain is UPF0339 protein Atu0232 from Agrobacterium fabrum (strain C58 / ATCC 33970) (Agrobacterium tumefaciens (strain C58)).